The following is a 365-amino-acid chain: Elongation factor Tu (365 aa).

Residues 1-7 (HVDHGKT), 62-66 (DCPGH), and 117-120 (NKCD) contribute to the GTP site. The region spanning 1-185 (HVDHGKTTLT…ILDTYIPEPK (185 aa)) is the tr-type G domain. A Mg(2+)-binding site is contributed by threonine 7.

The protein belongs to the TRAFAC class translation factor GTPase superfamily. Classic translation factor GTPase family. EF-Tu/EF-1A subfamily. As to quaternary structure, monomer.

It is found in the cytoplasm. The enzyme catalyses GTP + H2O = GDP + phosphate + H(+). Functionally, GTP hydrolase that promotes the GTP-dependent binding of aminoacyl-tRNA to the A-site of ribosomes during protein biosynthesis. This is Elongation factor Tu from Buchnera aphidicola subsp. Melaphis rhois.